The sequence spans 366 residues: Protein-glutamate methylesterase/protein-glutamine glutaminase (366 aa).

In terms of domain architecture, Response regulatory spans 5–123 (RVLVVDDSVV…SVGRSMEQVR (119 aa)). D56 carries the 4-aspartylphosphate modification. The region spanning 163 to 355 (PLGGHRLLVI…PEILRRLARQ (193 aa)) is the CheB-type methylesterase domain. Residues S175, H201, and D297 contribute to the active site.

It belongs to the CheB family. Post-translationally, phosphorylated by CheA. Phosphorylation of the N-terminal regulatory domain activates the methylesterase activity.

It is found in the cytoplasm. The enzyme catalyses [protein]-L-glutamate 5-O-methyl ester + H2O = L-glutamyl-[protein] + methanol + H(+). The catalysed reaction is L-glutaminyl-[protein] + H2O = L-glutamyl-[protein] + NH4(+). Involved in chemotaxis. Part of a chemotaxis signal transduction system that modulates chemotaxis in response to various stimuli. Catalyzes the demethylation of specific methylglutamate residues introduced into the chemoreceptors (methyl-accepting chemotaxis proteins or MCP) by CheR. Also mediates the irreversible deamidation of specific glutamine residues to glutamic acid. This chain is Protein-glutamate methylesterase/protein-glutamine glutaminase, found in Nocardioides sp. (strain ATCC BAA-499 / JS614).